Here is a 305-residue protein sequence, read N- to C-terminus: Serine/threonine-protein kinase 16 (305 aa).

The N-myristoyl glycine moiety is linked to residue glycine 2. Residues cysteine 6 and cysteine 8 are each lipidated (S-palmitoyl cysteine). Residues 20-293 enclose the Protein kinase domain; that stretch reads YLFVQKLGEG…PVLLSQLEAL (274 aa). ATP is bound by residues 26 to 34 and lysine 49; that span reads LGEGGFSYV. Aspartate 148 functions as the Proton acceptor in the catalytic mechanism. The tract at residues 166–202 is activation loop; sequence DLGSMNQACIQVEGSRQALALQDWAAQRCTISYRAPE. At serine 197 the chain carries Phosphoserine; by autocatalysis. Tyrosine 198 carries the post-translational modification Phosphotyrosine; by autocatalysis.

The protein belongs to the protein kinase superfamily. Ser/Thr protein kinase family. Monomer. Interacts with DRG1 (via its N-terminal); the interaction phosphorylates DRG1. Mainly autophosphorylated on serine/threonine residues. Also autophosphorylated on Tyr-198. Ubiquitously expressed at low levels. Relatively higher levels in testis, kidney and liver.

The protein resides in the cytoplasm. It localises to the perinuclear region. Its subcellular location is the membrane. The enzyme catalyses L-seryl-[protein] + ATP = O-phospho-L-seryl-[protein] + ADP + H(+). The catalysed reaction is L-threonyl-[protein] + ATP = O-phospho-L-threonyl-[protein] + ADP + H(+). It carries out the reaction L-tyrosyl-[protein] + ATP = O-phospho-L-tyrosyl-[protein] + ADP + H(+). Functionally, membrane-associated protein kinase that phosphorylates on serine and threonine residues. In vitro substrates include DRG1, ENO1 and EIF4EBP1. Also autophosphorylates. May be involved in secretory vesicle trafficking or intracellular signaling. May have a role in regulating stromal-epithelial interactions that occur during ductal morphogenesis in the mammary gland. May be involved in TGF-beta signaling. Able to autophosphorylate on Tyr residue; it is however unclear whether it has tyrosine-protein kinase toward other proteins. The chain is Serine/threonine-protein kinase 16 (Stk16) from Mus musculus (Mouse).